Here is a 252-residue protein sequence, read N- to C-terminus: uncharacterized protein (252 aa).

The signal sequence occupies residues 1 to 20 (MIATLGNLIIPVIFVNYVAS).

It belongs to the ascovirus HvAV ORF17 family.

This is an uncharacterized protein from Spodoptera frugiperda ascovirus 1a (SfAV-1a).